A 152-amino-acid chain; its full sequence is Large ribosomal subunit protein bL9 (152 aa).

The protein belongs to the bacterial ribosomal protein bL9 family.

Binds to the 23S rRNA. In Corynebacterium urealyticum (strain ATCC 43042 / DSM 7109), this protein is Large ribosomal subunit protein bL9.